A 572-amino-acid chain; its full sequence is Sulfate adenylyltransferase (572 aa).

The interval 1 to 169 (MANTPHGGVL…IQAINKLNHY (169 aa)) is N-terminal. Positions 170–394 (DYVGLRYTPA…LRESHPPRAK (225 aa)) are catalytic. Sulfate is bound at residue glutamine 197. Residues 197–200 (QTRN) and 291–294 (GRDH) each bind ATP. Residues threonine 198, arginine 199, and asparagine 200 contribute to the active site. Sulfate is bound at residue arginine 199. A sulfate-binding site is contributed by alanine 295. Position 333 (methionine 333) interacts with ATP. Residues 395–572 (QGFTIFLTGH…LLESQGFFGN (178 aa)) form an allosteric regulation domain; adenylyl-sulfate kinase-like region. Residues 434 to 437 (ETVR), arginine 451, 477 to 478 (IA), and lysine 515 each bind 3'-phosphoadenylyl sulfate.

In the N-terminal section; belongs to the sulfate adenylyltransferase family. The protein in the C-terminal section; belongs to the APS kinase family. In terms of assembly, homohexamer. Dimer of trimers.

Its subcellular location is the cytoplasm. The enzyme catalyses sulfate + ATP + H(+) = adenosine 5'-phosphosulfate + diphosphate. It functions in the pathway sulfur metabolism; hydrogen sulfide biosynthesis; sulfite from sulfate: step 1/3. Allosterically inhibited by 3'-phosphoadenosine 5'-phosphosulfate (PAPS). Its function is as follows. Catalyzes the first intracellular reaction of sulfate assimilation, forming adenosine-5'-phosphosulfate (APS) from inorganic sulfate and ATP. Plays an important role in sulfate activation as a component of the biosynthesis pathway of sulfur-containing amino acids. The protein is Sulfate adenylyltransferase of Yarrowia lipolytica (strain CLIB 122 / E 150) (Yeast).